A 432-amino-acid polypeptide reads, in one-letter code: MDALEKGAVTSGPAPRGRPSRGRPPKLQRSRGAGRGLEKPPHLAALVLARGGSKGIPLKNIKRLAGVPLIGWVLRAALDAGVFQSVWVSTDHDEIENVAKQFGAQVHRRSSETSKDSSTSLDAIVEFLNYHNEVDIVGNIQATSPCLHPTDLQKVAEMIREEGYDSVFSVVRRHQFRWSEIQKGVREVTEPLNLNPAKRPRRQDWDGELYENGSFYFAKRHLIEMGYLQGGKMAYYEMRAEHSVDIDVDIDWPIAEQRVLRFGYFGKEKLKEIKLLVCNIDGCLTNGHIYVSGDQKEIISYDVKDAIGISLLKKSGIEVRLISERACSKQTLSALKLDCKTEVSVSDKLATVDEWRKEMGLCWKEVAYLGNEVSDEECLKRVGLSAVPADACSGAQKAVGYICKCSGGRGAIREFAEHIFLLIEKVNNSCQK.

Met-1 is modified (N-acetylmethionine). Positions 1 to 38 (MDALEKGAVTSGPAPRGRPSRGRPPKLQRSRGAGRGLE) are disordered. The short motif at 15–31 (PRGRPSRGRPPKLQRSR) is the BC1 motif element. Basic residues predominate over residues 18–29 (RPSRGRPPKLQR). Arg-35 and Arg-50 each carry omega-N-methylarginine. Substrate is bound by residues Arg-50, Asn-60, Arg-109, Ser-118, Ser-120, and Gln-141. Positions 198 to 204 (KRPRRQD) match the BC2 motif motif. Arg-199 is a catalytic residue. The short motif at 267–274 (KEKLKEIK) is the BC3 motif element.

It belongs to the CMP-NeuNAc synthase family. As to quaternary structure, homotetramer; the active enzyme is formed by a dimer of dimers. In terms of tissue distribution, highly expressed in brain and heart, and at intermediate level muscle and liver.

The protein localises to the nucleus. The catalysed reaction is an N-acylneuraminate + CTP = a CMP-N-acyl-beta-neuraminate + diphosphate. It participates in amino-sugar metabolism; N-acetylneuraminate metabolism. In terms of biological role, catalyzes the activation of N-acetylneuraminic acid (NeuNAc) to cytidine 5'-monophosphate N-acetylneuraminic acid (CMP-NeuNAc), a substrate required for the addition of sialic acid. Has some activity toward NeuNAc, N-glycolylneuraminic acid (Neu5Gc) or 2-keto-3-deoxy-D-glycero-D-galacto-nononic acid (KDN). The sequence is that of N-acylneuraminate cytidylyltransferase (Cmas) from Mus musculus (Mouse).